A 546-amino-acid polypeptide reads, in one-letter code: Cytochrome P450 monooxygenase gloP (546 aa).

Residues 17-37 (TLSGGILTFLFIVVIAHFVLT) form a helical membrane-spanning segment. 3 N-linked (GlcNAc...) asparagine glycosylation sites follow: N189, N413, and N416. Heme is bound at residue C492.

It belongs to the cytochrome P450 family. Heme is required as a cofactor.

The protein resides in the membrane. It functions in the pathway mycotoxin biosynthesis. Its function is as follows. Cytochrome P450 monooxygenase; part of the gene cluster that mediates the biosynthesis of pneumocandins, lipohexapeptides of the echinocandin family that prevent fungal cell wall formation by non-competitive inhibition of beta-1,3-glucan synthase. The 10,12-dimethylmyristoyl side chain is synthesized by the reducing polyketide synthase gloL/GLPKS4. The thioesterase gloN/GLHYD exclusively interacts with gloL/GLPKS4 to maintain turnover of the polyketide side chain. The 10R,12S-dimethylmyristic acid is then transferred to the first thiolation domain of the nonribosomal peptide synthetase gloA/GLNRPS4 by the acyl-AMP ligase gloD/GLligase, followed by its acylation to L-ornithine to trigger elongation of the cyclic hexapeptide. L-ornithine, 4R-hydroxyl-L-proline (generated from L-proline by the dioxygenase gloF/GLOXY2), 3S-hydroxyl-L-homotyrosine (generated by gloG/GLHtyB, gloH/GLHtyA, gloI/GLHtyC, gloJ/GLHtyD and hydroxylated at C-3 by the dioxygenase gloM/GLOXY1), 3R-hydroxyl-L-glutamine (generated from L-glutamine probably by the dioxygenase gloE/GLOXY3) and 3S-hydroxyl-L-proline (generated from L-proline by the dioxygenase gloF/GLOXY2 to yield pneumocandin B0), or 3S-hydroxyl-4S-methyl-L-proline (generated from L-leucine by the dioxygenase gloC/GLOXY4 to yield pneumocandin A0) are sequentially added to the growing chain. The last C domain of gloA/GLNRPS4 is proposed to be responsible for cyclization by condensation to form the peptide bond between L-ornithine and 3S-hydroxyl-4S-methyl-L-proline (for pneumocandin A0) or 3S-hydroxyl-L-proline (for pneumocandin B0). Finally, the subsequent C-4 hydroxylation of 3S-hydroxyl-L-homotyrosine and L-ornithine dihydroxylation at C-4 and C-5 are performed by the cytochrome P450 monooxygenases gloP/GLP450-1 and gloO/GLP450-2, respectively. The chain is Cytochrome P450 monooxygenase gloP from Glarea lozoyensis (strain ATCC 20868 / MF5171).